Consider the following 159-residue polypeptide: UPF0262 protein RD1_1069 (159 aa).

It belongs to the UPF0262 family.

This chain is UPF0262 protein RD1_1069, found in Roseobacter denitrificans (strain ATCC 33942 / OCh 114) (Erythrobacter sp. (strain OCh 114)).